We begin with the raw amino-acid sequence, 234 residues long: Glucosamine-6-phosphate deaminase (234 aa).

Asp-63 (proton acceptor; for enolization step) is an active-site residue. The active-site For ring-opening step is the Asn-129. His-131 functions as the Proton acceptor; for ring-opening step in the catalytic mechanism. Glu-136 (for ring-opening step) is an active-site residue.

This sequence belongs to the glucosamine/galactosamine-6-phosphate isomerase family. NagB subfamily.

It carries out the reaction alpha-D-glucosamine 6-phosphate + H2O = beta-D-fructose 6-phosphate + NH4(+). It functions in the pathway amino-sugar metabolism; N-acetylneuraminate degradation; D-fructose 6-phosphate from N-acetylneuraminate: step 5/5. Functionally, catalyzes the reversible isomerization-deamination of glucosamine 6-phosphate (GlcN6P) to form fructose 6-phosphate (Fru6P) and ammonium ion. The chain is Glucosamine-6-phosphate deaminase from Listeria welshimeri serovar 6b (strain ATCC 35897 / DSM 20650 / CCUG 15529 / CIP 8149 / NCTC 11857 / SLCC 5334 / V8).